The sequence spans 68 residues: ATP synthase F(0) complex subunit 8 (68 aa).

A helical transmembrane segment spans residues 8–24 (VWPTMIAPMLLTLFLIT). The residue at position 54 (Lys-54) is an N6-acetyllysine; alternate. An N6-succinyllysine; alternate modification is found at Lys-54. Lys-57 is modified (N6-acetyllysine).

The protein belongs to the ATPase protein 8 family. Component of the ATP synthase complex composed at least of ATP5F1A/subunit alpha, ATP5F1B/subunit beta, ATP5MC1/subunit c (homooctomer), MT-ATP6/subunit a, MT-ATP8/subunit 8, ATP5ME/subunit e, ATP5MF/subunit f, ATP5MG/subunit g, ATP5MK/subunit k, ATP5MJ/subunit j, ATP5F1C/subunit gamma, ATP5F1D/subunit delta, ATP5F1E/subunit epsilon, ATP5PF/subunit F6, ATP5PB/subunit b, ATP5PD/subunit d, ATP5PO/subunit OSCP. ATP synthase complex consists of a soluble F(1) head domain (subunits alpha(3) and beta(3)) - the catalytic core - and a membrane F(0) domain - the membrane proton channel (subunits c, a, 8, e, f, g, k and j). These two domains are linked by a central stalk (subunits gamma, delta, and epsilon) rotating inside the F1 region and a stationary peripheral stalk (subunits F6, b, d, and OSCP). Interacts with PRICKLE3.

It localises to the mitochondrion membrane. Functionally, subunit 8, of the mitochondrial membrane ATP synthase complex (F(1)F(0) ATP synthase or Complex V) that produces ATP from ADP in the presence of a proton gradient across the membrane which is generated by electron transport complexes of the respiratory chain. ATP synthase complex consist of a soluble F(1) head domain - the catalytic core - and a membrane F(1) domain - the membrane proton channel. These two domains are linked by a central stalk rotating inside the F(1) region and a stationary peripheral stalk. During catalysis, ATP synthesis in the catalytic domain of F(1) is coupled via a rotary mechanism of the central stalk subunits to proton translocation. In vivo, can only synthesize ATP although its ATP hydrolase activity can be activated artificially in vitro. Part of the complex F(0) domain. This Gorilla gorilla gorilla (Western lowland gorilla) protein is ATP synthase F(0) complex subunit 8.